The sequence spans 20 residues: Thylakoid lumenal 18.4 kDa protein (20 aa).

Its subcellular location is the plastid. The protein resides in the chloroplast thylakoid lumen. This is Thylakoid lumenal 18.4 kDa protein from Spinacia oleracea (Spinach).